Here is a 393-residue protein sequence, read N- to C-terminus: Glutamate 5-kinase (393 aa).

An ATP-binding site is contributed by K17. Positions 57, 144, and 156 each coordinate substrate. S176–D177 provides a ligand contact to ATP. Positions A282 to A359 constitute a PUA domain. Positions A374 to A393 are disordered. Residues R379–A393 show a composition bias toward basic and acidic residues.

This sequence belongs to the glutamate 5-kinase family.

The protein localises to the cytoplasm. The enzyme catalyses L-glutamate + ATP = L-glutamyl 5-phosphate + ADP. The protein operates within amino-acid biosynthesis; L-proline biosynthesis; L-glutamate 5-semialdehyde from L-glutamate: step 1/2. Its function is as follows. Catalyzes the transfer of a phosphate group to glutamate to form L-glutamate 5-phosphate. In Sinorhizobium fredii (strain NBRC 101917 / NGR234), this protein is Glutamate 5-kinase.